A 295-amino-acid polypeptide reads, in one-letter code: Cell shape-determining protein MreC (295 aa).

The N-terminal stretch at 1–34 is a signal peptide; it reads MPQFFLNKRLIILLISIIVLVALVGFSLRDRENA. Positions 66–112 form a coiled coil; that stretch reads VVDLKNTYTENQHLKERLEELAQLESEVADLKKENKDLKESLDITDS. Positions 276-295 are disordered; it reads SAEAGTTDDDTTSSDTTGGQ.

Belongs to the MreC family. As to quaternary structure, homooligomer of 24 subunits, arranged as 12 dimers.

In terms of biological role, involved in formation and maintenance of cell shape. The chain is Cell shape-determining protein MreC from Listeria monocytogenes serovar 1/2a (strain ATCC BAA-679 / EGD-e).